An 86-amino-acid chain; its full sequence is Small ribosomal subunit protein bS16 (86 aa).

It belongs to the bacterial ribosomal protein bS16 family.

The chain is Small ribosomal subunit protein bS16 from Bordetella avium (strain 197N).